The following is a 168-amino-acid chain: MAKLKIKKYGDPALRKRAEAVSEINEIIKELASDMLETMYSASGVGLAAPQVGILLRFCVIDVDPNKKSPIVMINPEIISGENKITAEEGCLSFPGFYGNVNRFENIIAGYTDLNGNRQEIKAQNFLAKALQHEIDHLDAKLFIDYLPDWKRESIEKKIKRKKKAGDW.

Positions 91 and 133 each coordinate Fe cation. The active site involves glutamate 134. Histidine 137 serves as a coordination point for Fe cation.

The protein belongs to the polypeptide deformylase family. It depends on Fe(2+) as a cofactor.

It catalyses the reaction N-terminal N-formyl-L-methionyl-[peptide] + H2O = N-terminal L-methionyl-[peptide] + formate. Its function is as follows. Removes the formyl group from the N-terminal Met of newly synthesized proteins. Requires at least a dipeptide for an efficient rate of reaction. N-terminal L-methionine is a prerequisite for activity but the enzyme has broad specificity at other positions. The sequence is that of Peptide deformylase from Endomicrobium trichonymphae.